Here is a 149-residue protein sequence, read N- to C-terminus: Nucleoside diphosphate kinase (149 aa).

The ATP site is built by lysine 9, phenylalanine 57, arginine 85, threonine 91, arginine 102, and asparagine 112. Histidine 115 functions as the Pros-phosphohistidine intermediate in the catalytic mechanism.

This sequence belongs to the NDK family. Homotetramer. The cofactor is Mg(2+).

The protein localises to the cytoplasm. The enzyme catalyses a 2'-deoxyribonucleoside 5'-diphosphate + ATP = a 2'-deoxyribonucleoside 5'-triphosphate + ADP. It carries out the reaction a ribonucleoside 5'-diphosphate + ATP = a ribonucleoside 5'-triphosphate + ADP. Functionally, major role in the synthesis of nucleoside triphosphates other than ATP. The ATP gamma phosphate is transferred to the NDP beta phosphate via a ping-pong mechanism, using a phosphorylated active-site intermediate. The polypeptide is Nucleoside diphosphate kinase (Gloeobacter violaceus (strain ATCC 29082 / PCC 7421)).